Reading from the N-terminus, the 292-residue chain is Cytidine deaminase (292 aa).

2 consecutive CMP/dCMP-type deaminase domains span residues 47 to 167 and 186 to 292; these read TPLK…FGPK and DHQD…YYSL. 88–90 is a binding site for substrate; that stretch reads NQE. A Zn(2+)-binding site is contributed by His101. Glu103 acts as the Proton donor in catalysis. Zn(2+)-binding residues include Cys128 and Cys131.

Belongs to the cytidine and deoxycytidylate deaminase family. In terms of assembly, homodimer. Requires Zn(2+) as cofactor.

It catalyses the reaction cytidine + H2O + H(+) = uridine + NH4(+). It carries out the reaction 2'-deoxycytidine + H2O + H(+) = 2'-deoxyuridine + NH4(+). In terms of biological role, this enzyme scavenges exogenous and endogenous cytidine and 2'-deoxycytidine for UMP synthesis. In Haemophilus influenzae (strain 86-028NP), this protein is Cytidine deaminase.